The following is a 231-amino-acid chain: MERGTIHNKGSFLSNISKNLQREMPQHVERPEWQYRPQDKTLTGLTQDELLEVLRQQCNFIHTDLVETTTDNINETLSQVIEKYGNGEVIAWNDKRFADFGIDLEAHDAFIWDEAKGAENLQVAERANVGITFSDVTLAESGTVVLYADKGKGRSVSLLPATYIAIVPKSTIVPRFTQAAQQMNAMMEDQENFPTCINLITGPSNSADIEMKLVVGVHGPIKATYIVVDDK.

The protein belongs to the LutC/YkgG family.

Is involved in L-lactate degradation and allows cells to grow with lactate as the sole carbon source. This Macrococcus caseolyticus (strain JCSC5402) (Macrococcoides caseolyticum) protein is Lactate utilization protein C.